Reading from the N-terminus, the 20-residue chain is Alpha-conotoxin-like ts14a (20 aa).

Cystine bridges form between Cys-3/Cys-16 and Cys-14/Cys-20.

Expressed by the venom duct.

The protein localises to the secreted. Alpha-conotoxins act on postsynaptic membranes, they bind to the nicotinic acetylcholine receptors (nAChR) and thus inhibit them. This is Alpha-conotoxin-like ts14a from Conus tessulatus (Tessellate cone).